The chain runs to 303 residues: Movement protein (303 aa).

Polar residues predominate over residues 1–18 (MSNIVSPFSGSSRTTSDV). Disordered stretches follow at residues 1 to 24 (MSNIVSPFSGSSRTTSDVGKQAGG) and 267 to 303 (EESESPSALGRGVKDSKSVSASSVAGLPVSSPTLRIK).

Belongs to the bromovirus movement protein family. In terms of processing, phosphorylated by host.

Its subcellular location is the host cell junction. The protein localises to the host plasmodesma. Transports viral genome to neighboring plant cells directly through plasmosdesmata, without any budding. The movement protein allows efficient cell to cell propagation, by bypassing the host cell wall barrier. Acts by forming a tubular structure at the host plasmodesmata, enlarging it enough to allow free passage of virion capsids. This chain is Movement protein, found in Brome mosaic virus (BMV).